Here is a 626-residue protein sequence, read N- to C-terminus: UvrABC system protein C (626 aa).

Residues 25–104 (TSPGVYRFSN…IKELKPRYNV (80 aa)) form the GIY-YIG domain. The UVR domain maps to 218-253 (SALLRDLSAEMQKKAKELKFEEAAALKAQIEGLKRY).

It belongs to the UvrC family. As to quaternary structure, interacts with UvrB in an incision complex.

The protein resides in the cytoplasm. Its function is as follows. The UvrABC repair system catalyzes the recognition and processing of DNA lesions. UvrC both incises the 5' and 3' sides of the lesion. The N-terminal half is responsible for the 3' incision and the C-terminal half is responsible for the 5' incision. The polypeptide is UvrABC system protein C (Chlorobaculum tepidum (strain ATCC 49652 / DSM 12025 / NBRC 103806 / TLS) (Chlorobium tepidum)).